Consider the following 857-residue polypeptide: Inactive rhomboid protein 1 (857 aa).

Topologically, residues 1-413 (MAELRRDSTS…HRPFFTYWIT (413 aa)) are cytoplasmic. Residues 283–307 (FESPSDSTMKDVDSKQLDESELTGS) form a disordered region. Residues 290-300 (TMKDVDSKQLD) are compositionally biased toward basic and acidic residues. The helical transmembrane segment at 414–434 (FVHILITILAVCIYGIAPVGF) threads the bilayer. The Lumenal segment spans residues 435-661 (SQHETVDSVL…PDQFYRLWLS (227 aa)). The N-linked (GlcNAc...) asparagine glycan is linked to asparagine 585. The chain crosses the membrane as a helical span at residues 662 to 682 (LFLHAGILHCLVSVCFQMTIL). Over 683-693 (RDLEKLAGWLR) the chain is Cytoplasmic. Residues 694–714 (ISIIYILSGITGNLASAIFLP) traverse the membrane as a helical segment. Residues 715-716 (YR) lie on the Lumenal side of the membrane. The helical transmembrane segment at 717–737 (AEVGPAGSQFGILACLFVELI) threads the bilayer. The Cytoplasmic portion of the chain corresponds to 738-748 (QSWQILAQPWR). A helical transmembrane segment spans residues 749 to 769 (AFTKLLCVVLFLFAFGLLPWI). At 770 to 774 (DNFAH) the chain is on the lumenal side. Residues 775-795 (ISGFISGFFLSFAFLPYISFG) form a helical membrane-spanning segment. The Cytoplasmic portion of the chain corresponds to 796 to 805 (RLDMYRKRCQ). Residues 806–826 (IIIFLVVFLGLFAGLVVLFYV) traverse the membrane as a helical segment. Over 827–857 (HPIKCEWCELLTCIPFTDKFCEKYDLNAHLH) the chain is Lumenal.

The protein belongs to the peptidase S54 family.

It localises to the endoplasmic reticulum membrane. The protein resides in the golgi apparatus membrane. Functionally, regulates ADAM17 protease, a sheddase of the epidermal growth factor (EGF) receptor ligands and TNF, thereby plays a role in sleep, cell survival, proliferation, migration and inflammation. Does not exhibit any protease activity on its own. The polypeptide is Inactive rhomboid protein 1 (rhbdf1) (Danio rerio (Zebrafish)).